The chain runs to 508 residues: Pyruvate kinase, cytosolic isozyme (508 aa).

Arg-48 contributes to the substrate binding site. Residues Asn-50, Ser-52, Asp-82, and Thr-83 each coordinate K(+). Asn-50 to His-53 provides a ligand contact to ATP. 2 residues coordinate ATP: Arg-89 and Lys-174. Mg(2+) is bound at residue Glu-240. Substrate-binding residues include Gly-263, Asp-264, and Thr-296. Position 264 (Asp-264) interacts with Mg(2+).

The protein belongs to the pyruvate kinase family. Homotetramer. Mg(2+) is required as a cofactor. Requires K(+) as cofactor.

The protein resides in the cytoplasm. It catalyses the reaction pyruvate + ATP = phosphoenolpyruvate + ADP + H(+). It functions in the pathway carbohydrate degradation; glycolysis; pyruvate from D-glyceraldehyde 3-phosphate: step 5/5. This Nicotiana tabacum (Common tobacco) protein is Pyruvate kinase, cytosolic isozyme.